The sequence spans 309 residues: MTDSLIHTGPFLVAALYHFVSVPRFASLQAPLQALSEENGVKGTLLLAHEGINGTIAGPDAGIHAVLAFLRAQPEFARLEHKESRASKMPFLRMKVKLKKEIVTMGVEDIDPNKVVGTYVAPRDWNALISDPDTIVIDTRNDYETAIGTFRGALDPKTKTFREFPDWVRRNTGLHNKPKVAMYCTGGIRCEKATAFMKAEGFDEVYHLKGGILKYLEEVPQEESLWEGACFVFDERVSVEHGLKEGEHRLCHACRNPITSEEITSPLYEEGVSCSHCYHTRTEEDRLRYRQRQLQIALARKRGQRHIGS.

Positions 130 to 224 constitute a Rhodanese domain; it reads SDPDTIVIDT…YLEEVPQEES (95 aa). Cysteine 184 (cysteine persulfide intermediate) is an active-site residue.

Belongs to the TrhO family.

The catalysed reaction is uridine(34) in tRNA + AH2 + O2 = 5-hydroxyuridine(34) in tRNA + A + H2O. Its function is as follows. Catalyzes oxygen-dependent 5-hydroxyuridine (ho5U) modification at position 34 in tRNAs. This chain is tRNA uridine(34) hydroxylase, found in Rhizobium etli (strain ATCC 51251 / DSM 11541 / JCM 21823 / NBRC 15573 / CFN 42).